An 812-amino-acid chain; its full sequence is Glycerol-3-phosphate acyltransferase (812 aa).

The HXXXXD motif signature appears at 308–313 (CHRSHM).

It belongs to the GPAT/DAPAT family.

It localises to the cell inner membrane. It catalyses the reaction sn-glycerol 3-phosphate + an acyl-CoA = a 1-acyl-sn-glycero-3-phosphate + CoA. Its pathway is phospholipid metabolism; CDP-diacylglycerol biosynthesis; CDP-diacylglycerol from sn-glycerol 3-phosphate: step 1/3. The chain is Glycerol-3-phosphate acyltransferase from Pseudoalteromonas translucida (strain TAC 125).